Here is a 48-residue protein sequence, read N- to C-terminus: Protein TUNAR (48 aa).

The tract at residues 1–20 (MVITSGNDEDRGGQEKESKE) is disordered. Residues 8-20 (DEDRGGQEKESKE) show a composition bias toward basic and acidic residues. A helical transmembrane segment spans residues 24 to 44 (LAMLGIIGTILNLIVIIFVYI).

In terms of assembly, interacts with ATPase ATP2A2/SERCA2. Interacts with ATPase ATP2A3/SERCA3; the interaction occurs at low levels in low glucose conditions and is increased by high glucose levels. In terms of tissue distribution, in the adult, expressed in Purkinje cells in the cerebellum, in motor neurons and interneurons in the spinal cord and in neurons of the cortex, hippocampus and thalamus (at protein level). Also detected in the developing cortex, hippocampus and thalamus at embryonic day E15.5 (at protein level).

It localises to the endoplasmic reticulum membrane. It is found in the extracellular vesicle membrane. Its function is as follows. In neurons, plays a role in the regulation of intracellular Ca(2+), possibly by acting as an activator of ATP2A2/SERCA2, thus increasing the efficiency with which Ca(2+) is removed from the cytoplasm. Inhibits differentiation of embryonic stem cells into neurons and inhibits neurite outgrowth, likely as a result of its role in intracellular Ca(2+) regulation. In pancreatic beta cells, lowers Ca(2+) levels in the endoplasmic reticulum and enhances glucose-stimulated insulin secretion. In Mus musculus (Mouse), this protein is Protein TUNAR.